A 116-amino-acid chain; its full sequence is EDHPVHNLGEHSVCDSVSAWVTKTTATDIKGNTVTVMENVNLDNKVYKEYFFETKCKNPNPEPSGCRGIDSSHWNSYCTETDTFIKALTMEGNQASWRFIRIDTACVCVITKKTGN.

3 disulfide bridges follow: Cys14-Cys78, Cys56-Cys106, and Cys66-Cys108.

The protein belongs to the NGF-beta family. In terms of assembly, homodimer; non-covalently linked. Post-translationally, not glycosylated. As to expression, expressed by the venom gland.

The protein resides in the secreted. Its function is as follows. Nerve growth factor is important for the development and maintenance of the sympathetic and sensory nervous systems. It stimulates division and differentiation of sympathetic and embryonic sensory neurons as well as basal forebrain cholinergic neurons in the brain. Its relevance in the snake venom is not clear. However, it has been shown to inhibit metalloproteinase-dependent proteolysis of platelet glycoprotein Ib alpha, suggesting a metalloproteinase inhibition to prevent metalloprotease autodigestion and/or protection against prey proteases. Binds a lipid between the two protein chains in the homodimer. The lipid-bound form promotes histamine relase from mouse mast cells, contrary to the lipid-free form. The polypeptide is Venom nerve growth factor (Naja naja (Indian cobra)).